A 1069-amino-acid polypeptide reads, in one-letter code: Carbamoyl phosphate synthase large chain (1069 aa).

The interval 1–401 (MPLNKDIKRV…AFLKGIRSLE (401 aa)) is carboxyphosphate synthetic domain. 12 residues coordinate ATP: R129, R169, G175, G176, K208, V210, E215, G241, I242, H243, Q284, and E298. The ATP-grasp 1 domain maps to 133–327 (RDMMNRIGEP…IAKLAAKIAL (195 aa)). Q284, E298, and N300 together coordinate Mg(2+). Mn(2+)-binding residues include Q284, E298, and N300. Residues 402-549 (IGKYSLDHKK…YSTYEQYDEV (148 aa)) form an oligomerization domain region. Residues 550–932 (EVSNRRKVIV…ALYKGFVGAN (383 aa)) are carbamoyl phosphate synthetic domain. Positions 674–864 (DELLERLDIS…IVDIATQVML (191 aa)) constitute an ATP-grasp 2 domain. Residues R710, K749, L751, E755, G780, V781, H782, S783, Q823, and E835 each contribute to the ATP site. Residues Q823, E835, and N837 each contribute to the Mg(2+) site. 3 residues coordinate Mn(2+): Q823, E835, and N837. Residues 932–1069 (NMYPSKEKGK…KDLEVFDITK (138 aa)) form the MGS-like domain. The tract at residues 933 to 1069 (MYPSKEKGKI…KDLEVFDITK (137 aa)) is allosteric domain.

It belongs to the CarB family. In terms of assembly, composed of two chains; the small (or glutamine) chain promotes the hydrolysis of glutamine to ammonia, which is used by the large (or ammonia) chain to synthesize carbamoyl phosphate. Tetramer of heterodimers (alpha,beta)4. The cofactor is Mg(2+). Requires Mn(2+) as cofactor.

It catalyses the reaction hydrogencarbonate + L-glutamine + 2 ATP + H2O = carbamoyl phosphate + L-glutamate + 2 ADP + phosphate + 2 H(+). It carries out the reaction hydrogencarbonate + NH4(+) + 2 ATP = carbamoyl phosphate + 2 ADP + phosphate + 2 H(+). It participates in amino-acid biosynthesis; L-arginine biosynthesis; carbamoyl phosphate from bicarbonate: step 1/1. It functions in the pathway pyrimidine metabolism; UMP biosynthesis via de novo pathway; (S)-dihydroorotate from bicarbonate: step 1/3. Functionally, large subunit of the glutamine-dependent carbamoyl phosphate synthetase (CPSase). CPSase catalyzes the formation of carbamoyl phosphate from the ammonia moiety of glutamine, carbonate, and phosphate donated by ATP, constituting the first step of 2 biosynthetic pathways, one leading to arginine and/or urea and the other to pyrimidine nucleotides. The large subunit (synthetase) binds the substrates ammonia (free or transferred from glutamine from the small subunit), hydrogencarbonate and ATP and carries out an ATP-coupled ligase reaction, activating hydrogencarbonate by forming carboxy phosphate which reacts with ammonia to form carbamoyl phosphate. The chain is Carbamoyl phosphate synthase large chain from Clostridium botulinum (strain Alaska E43 / Type E3).